Consider the following 146-residue polypeptide: Leghemoglobin-3 (146 aa).

Positions 2-146 constitute a Globin domain; it reads GFTDKQEALV…LATAIKKAMV (145 aa). Residue Tyr29 is modified to Nitrated tyrosine. Ser44 serves as a coordination point for heme b. Position 44 is a phosphoserine (Ser44). His61 contacts O2. Positions 64, 93, and 96 each coordinate heme b. At Tyr134 the chain carries Nitrated tyrosine.

The protein belongs to the plant globin family. As to quaternary structure, monomer. In terms of processing, nitrated in effective nodules and particularly in hypoxic conditions; this mechanism may play a protective role in the symbiosis by buffering toxic peroxynitrite NO(2)(-). Nitration level decrease during nodule senescence. Post-translationally, phosphorylation at Ser-44 disrupts the molecular environment of its porphyrin ring oxygen binding pocket, thus leading to a reduced oxygen consumption and to the delivery of oxygen O(2) to symbiosomes. Root nodules.

It is found in the cytoplasm. It localises to the cytosol. The protein localises to the nucleus. Its function is as follows. Leghemoglobin that reversibly binds oxygen O(2) through a pentacoordinated heme iron. In root nodules, facilitates the diffusion of oxygen to the bacteroids while preventing the bacterial nitrogenase from being inactivated by buffering dioxygen, nitric oxide and carbon monoxide, and promoting the formation of reactive oxygen species (ROS, e.g. H(2)O(2)). This role is essential for symbiotic nitrogen fixation (SNF). The polypeptide is Leghemoglobin-3 (Medicago sativa (Alfalfa)).